The primary structure comprises 383 residues: Putative [LysW]-aminoadipate semialdehyde/glutamate semialdehyde transaminase (383 aa).

Pyridoxal 5'-phosphate contacts are provided by residues 97 to 98 (GT) and Phe-124. Arg-127 is a substrate binding site. 209–212 (DEVQ) is a binding site for pyridoxal 5'-phosphate. Lys-238 is modified (N6-(pyridoxal phosphate)lysine). Residue Ser-266 coordinates substrate. Thr-267 is a pyridoxal 5'-phosphate binding site.

This sequence belongs to the class-III pyridoxal-phosphate-dependent aminotransferase family. LysJ subfamily. As to quaternary structure, homodimer. Pyridoxal 5'-phosphate serves as cofactor.

Its subcellular location is the cytoplasm. The catalysed reaction is [amino-group carrier protein]-C-terminal-gamma-(L-lysyl)-L-glutamate + 2-oxoglutarate = [amino-group carrier protein]-C-terminal-N-(1-carboxy-5-oxopentan-1-yl)-L-glutamine + L-glutamate. The enzyme catalyses [amino-group carrier protein]-C-terminal-gamma-(L-ornithyl)-L-glutamate + 2-oxoglutarate = [amino-group carrier protein]-C-terminal-gamma-(L-glutamyl-5-semialdehyde)-L-glutamate + L-glutamate. It participates in amino-acid biosynthesis; L-lysine biosynthesis via AAA pathway; L-lysine from L-alpha-aminoadipate (Thermus route): step 4/5. The protein operates within amino-acid biosynthesis; L-arginine biosynthesis. Functionally, involved in both the arginine and lysine biosynthetic pathways. The polypeptide is Putative [LysW]-aminoadipate semialdehyde/glutamate semialdehyde transaminase (Pyrobaculum aerophilum (strain ATCC 51768 / DSM 7523 / JCM 9630 / CIP 104966 / NBRC 100827 / IM2)).